A 93-amino-acid chain; its full sequence is Putative pterin-4-alpha-carbinolamine dehydratase (93 aa).

It belongs to the pterin-4-alpha-carbinolamine dehydratase family.

It catalyses the reaction (4aS,6R)-4a-hydroxy-L-erythro-5,6,7,8-tetrahydrobiopterin = (6R)-L-erythro-6,7-dihydrobiopterin + H2O. The sequence is that of Putative pterin-4-alpha-carbinolamine dehydratase from Chloroflexus aurantiacus (strain ATCC 29366 / DSM 635 / J-10-fl).